The chain runs to 33 residues: Brevinin-2Ea (33 aa).

An intrachain disulfide couples Cys-27 to Cys-33.

Belongs to the frog skin active peptide (FSAP) family. Brevinin subfamily. As to expression, expressed by the skin glands.

It localises to the secreted. Functionally, shows antibacterial activity against representative Gram-negative and Gram-positive bacterial species, and hemolytic activity. This Pelophylax lessonae (Pool frog) protein is Brevinin-2Ea.